The sequence spans 450 residues: Ribosomal protein uS12 methylthiotransferase RimO (450 aa).

The region spanning 9 to 124 (NRINVVTLGC…LLSALEADYK (116 aa)) is the MTTase N-terminal domain. Residues C18, C53, C87, C148, C152, and C155 each coordinate [4Fe-4S] cluster. The Radical SAM core domain maps to 134–365 (TTPKNYAYLK…EIQSQISWEL (232 aa)). Positions 367-434 (QQKIGEVFNV…DFDLYGEPLN (68 aa)) constitute a TRAM domain.

It belongs to the methylthiotransferase family. RimO subfamily. Requires [4Fe-4S] cluster as cofactor.

The protein resides in the cytoplasm. The enzyme catalyses L-aspartate(89)-[ribosomal protein uS12]-hydrogen + (sulfur carrier)-SH + AH2 + 2 S-adenosyl-L-methionine = 3-methylsulfanyl-L-aspartate(89)-[ribosomal protein uS12]-hydrogen + (sulfur carrier)-H + 5'-deoxyadenosine + L-methionine + A + S-adenosyl-L-homocysteine + 2 H(+). Its function is as follows. Catalyzes the methylthiolation of an aspartic acid residue of ribosomal protein uS12. This is Ribosomal protein uS12 methylthiotransferase RimO from Christiangramia forsetii (strain DSM 17595 / CGMCC 1.15422 / KT0803) (Gramella forsetii).